A 221-amino-acid chain; its full sequence is Molybdenum cofactor guanylyltransferase (221 aa).

Residues 18–20 (IAG), lysine 35, asparagine 63, aspartate 81, and aspartate 112 contribute to the GTP site. Residue aspartate 112 coordinates Mg(2+).

It belongs to the MobA family. As to quaternary structure, monomer. Mg(2+) serves as cofactor.

The protein resides in the cytoplasm. The catalysed reaction is Mo-molybdopterin + GTP + H(+) = Mo-molybdopterin guanine dinucleotide + diphosphate. In terms of biological role, transfers a GMP moiety from GTP to Mo-molybdopterin (Mo-MPT) cofactor (Moco or molybdenum cofactor) to form Mo-molybdopterin guanine dinucleotide (Mo-MGD) cofactor. This is Molybdenum cofactor guanylyltransferase from Brucella melitensis biotype 2 (strain ATCC 23457).